The following is a 61-amino-acid chain: MSRRYSLATITLVILFCGRPHCRKISVRQYYQKRVIFYPTTLQRTAFKKYLFLIRDIIISS.

This is an uncharacterized protein from Escherichia coli O6:K15:H31 (strain 536 / UPEC).